Here is a 577-residue protein sequence, read N- to C-terminus: Laccase-25 (577 aa).

The N-terminal stretch at 1 to 22 (MTLHWSLLLFIAIALVSSVAQA) is a signal peptide. Plastocyanin-like domains follow at residues 30 to 147 (NVGN…PRGG) and 158 to 313 (KEHV…YAGA). Asn33 is a glycosylation site (N-linked (GlcNAc...) asparagine). Cu cation-binding residues include His81 and His83. N-linked (GlcNAc...) asparagine glycosylation occurs at Asn109. Cu cation-binding residues include His126 and His128. Residues Asn169, Asn203, Asn208, Asn218, Asn332, Asn383, Asn396, Asn404, Asn441, and Asn459 are each glycosylated (N-linked (GlcNAc...) asparagine). Residues 423–560 (DFPDTPPVVF…AMVLEVLDGP (138 aa)) enclose the Plastocyanin-like 3 domain. 7 residues coordinate Cu cation: His477, His480, His482, His539, Cys540, His541, and His545.

The protein belongs to the multicopper oxidase family. Requires Cu cation as cofactor.

Its subcellular location is the secreted. The protein resides in the extracellular space. The protein localises to the apoplast. It carries out the reaction 4 hydroquinone + O2 = 4 benzosemiquinone + 2 H2O. Its function is as follows. Lignin degradation and detoxification of lignin-derived products. The protein is Laccase-25 (LAC25) of Oryza sativa subsp. japonica (Rice).